Here is a 171-residue protein sequence, read N- to C-terminus: MSTKDPHRLPHEKGFHISWDQIHRDSRALAWRLDGQGPDEGAWRAVVAITRGGMAPAMIVSRELDIRTVDTISVKSYHHQAQGQAQVLKAPDAGLMGDGTGILVIDDLVDSGKTLELVREMYPNAHFATVYAKPKGRPMVDTFITEVSQDTWIFFPWDMALQYVEPYRGTD.

5-phospho-alpha-D-ribose 1-diphosphate is bound by residues 51–52 (RG) and 106–114 (DDLVDSGKT). Asp107 contacts Mg(2+). Residues Asp110 and Ile153 each contribute to the guanine site. Xanthine-binding residues include Asp110 and Ile153. GMP contacts are provided by residues 110-114 (DSGKT) and 152-153 (WI).

Belongs to the purine/pyrimidine phosphoribosyltransferase family. XGPT subfamily. As to quaternary structure, homotetramer. It depends on Mg(2+) as a cofactor.

It is found in the cell inner membrane. The enzyme catalyses GMP + diphosphate = guanine + 5-phospho-alpha-D-ribose 1-diphosphate. The catalysed reaction is XMP + diphosphate = xanthine + 5-phospho-alpha-D-ribose 1-diphosphate. It catalyses the reaction IMP + diphosphate = hypoxanthine + 5-phospho-alpha-D-ribose 1-diphosphate. The protein operates within purine metabolism; GMP biosynthesis via salvage pathway; GMP from guanine: step 1/1. Its pathway is purine metabolism; XMP biosynthesis via salvage pathway; XMP from xanthine: step 1/1. In terms of biological role, purine salvage pathway enzyme that catalyzes the transfer of the ribosyl-5-phosphate group from 5-phospho-alpha-D-ribose 1-diphosphate (PRPP) to the N9 position of the 6-oxopurines guanine and xanthine to form the corresponding ribonucleotides GMP (guanosine 5'-monophosphate) and XMP (xanthosine 5'-monophosphate), with the release of PPi. To a lesser extent, also acts on hypoxanthine. This chain is Xanthine-guanine phosphoribosyltransferase, found in Ruegeria pomeroyi (strain ATCC 700808 / DSM 15171 / DSS-3) (Silicibacter pomeroyi).